The chain runs to 255 residues: Taurine import ATP-binding protein TauB (255 aa).

The ABC transporter domain occupies L2 to A229. G34–T41 is an ATP binding site.

This sequence belongs to the ABC transporter superfamily. Taurine importer (TC 3.A.1.17.1) family. In terms of assembly, the complex is composed of two ATP-binding proteins (TauB), two transmembrane proteins (TauC) and a solute-binding protein (TauA).

It localises to the cell inner membrane. It catalyses the reaction taurine(out) + ATP + H2O = taurine(in) + ADP + phosphate + H(+). In terms of biological role, part of the ABC transporter complex TauABC involved in taurine import. Responsible for energy coupling to the transport system. The protein is Taurine import ATP-binding protein TauB of Yersinia pseudotuberculosis serotype I (strain IP32953).